A 462-amino-acid polypeptide reads, in one-letter code: dTDP-4-dehydro-2,6-dideoxy-D-glucose 3-dehydratase (462 aa).

Pyridoxal 5'-phosphate contacts are provided by residues 112–113 (GS), Asp-220, and Ser-241. His-246 (proton donor/acceptor) is an active-site residue. Asn-314 contacts pyridoxal 5'-phosphate.

Belongs to the DegT/DnrJ/EryC1 family. As to quaternary structure, homodimer. Pyridoxal 5'-phosphate is required as a cofactor.

The catalysed reaction is dTDP-4-dehydro-2,6-dideoxy-alpha-D-glucose + 2 reduced [2Fe-2S]-[ferredoxin] + 2 H(+) = dTDP-4-dehydro-2,3,6-trideoxy-alpha-D-hexopyranose + 2 oxidized [2Fe-2S]-[ferredoxin] + H2O. Its function is as follows. Involved in the biosynthesis of forosamine ((4-dimethylamino)-2,3,4,6-tetradeoxy-alpha-D-threo-hexopyranose), a highly deoxygenated sugar component of several bioactive natural products such as the insecticidal spinosyns A and D. Catalyzes C-3 deoxygenation of dTDP-4-keto-2,6-dideoxy-alpha-D-glucose to yield dTDP-4-keto-2,3,6-trideoxy-D-glucose via a combined transamination-deoxygenation reaction. The catalysis is initiated by a transamination step in which pyridoxal 5'-phosphate (PLP) is converted to pyridoxamine 5'-phosphate (PMP) in the presence of L-glutamate. This coenzyme then forms a Schiff base with dTDP-4-keto-2,6-dideoxy-alpha-D-glucose and the resulting adduct undergoes a PMP-mediated beta-dehydration reaction to give a sugar enamine intermediate, which after a 2 electrons reduction and hydrolysis yields dTDP-4-keto-2,3,6-trideoxy-D-glucose as a product. Requires cellular reductase (ferredoxin or flavodoxin reductase) rather than a specific partner reductase. L-glutamate is 20-fold more efficient than L-aspartate as an amino donor. In the absence of an electron source and in the presence of L-glutamate, catalyzes a transamination reaction, converting dTDP-4-keto-2,6-dideoxy-alpha-D-glucose to dTDP-4-amino-2,4,6-trideoxy-D-glucose. This is dTDP-4-dehydro-2,6-dideoxy-D-glucose 3-dehydratase from Saccharopolyspora spinosa.